The sequence spans 470 residues: 6-phosphofructo-2-kinase/fructose-2,6-bisphosphatase (470 aa).

The 6-phosphofructo-2-kinase stretch occupies residues 1 to 249; the sequence is MAAVASGQLT…VYYLMNTHVT (249 aa). Position 31 is a phosphoserine; by PKA (Ser31). 47–55 contributes to the ATP binding site; it reads GLRRPGKTY. The beta-D-fructose 6-phosphate site is built by Arg80 and Arg104. Residue Asp130 is part of the active site. 2 residues coordinate beta-D-fructose 6-phosphate: Thr132 and Arg138. Cys160 is an active-site residue. An ATP-binding site is contributed by 169-174; the sequence is NIKQVK. The beta-D-fructose 6-phosphate site is built by Lys174, Arg195, and Tyr199. Positions 250-469 are fructose-2,6-bisphosphatase; the sequence is PRAIYLSRHG…AEALVTVPEH (220 aa). Arg257 is a binding site for beta-D-fructose 2,6-bisphosphate. His258 (tele-phosphohistidine intermediate) is an active-site residue. Beta-D-fructose 2,6-bisphosphate is bound by residues Asn264 and Gly270. Glu327 acts as the Proton donor/acceptor in catalysis. The beta-D-fructose 2,6-bisphosphate site is built by Tyr338, Arg352, Lys356, Tyr367, Gln393, and Arg397. ATP is bound at residue 349-352; that stretch reads FALR. Residues 393 to 397 and Tyr429 contribute to the ATP site; that span reads QAVMR.

This sequence in the C-terminal section; belongs to the phosphoglycerate mutase family. Homodimer. As to expression, liver.

It catalyses the reaction beta-D-fructose 2,6-bisphosphate + H2O = beta-D-fructose 6-phosphate + phosphate. The catalysed reaction is beta-D-fructose 6-phosphate + ATP = beta-D-fructose 2,6-bisphosphate + ADP + H(+). With respect to regulation, phosphorylation results in inhibition of the kinase activity. Functionally, synthesis and degradation of fructose 2,6-bisphosphate. In Gallus gallus (Chicken), this protein is 6-phosphofructo-2-kinase/fructose-2,6-bisphosphatase.